Reading from the N-terminus, the 339-residue chain is DNA-directed RNA polymerase subunit alpha (339 aa).

The segment at 1-235 (MVIQKNWQEL…DQLQVFVNFE (235 aa)) is alpha N-terminal domain (alpha-NTD). The alpha C-terminal domain (alpha-CTD) stretch occupies residues 251–339 (FNPALLKKVD…DLAKRFEEHY (89 aa)).

It belongs to the RNA polymerase alpha chain family. Homodimer. The RNAP catalytic core consists of 2 alpha, 1 beta, 1 beta' and 1 omega subunit. When a sigma factor is associated with the core the holoenzyme is formed, which can initiate transcription.

It carries out the reaction RNA(n) + a ribonucleoside 5'-triphosphate = RNA(n+1) + diphosphate. In terms of biological role, DNA-dependent RNA polymerase catalyzes the transcription of DNA into RNA using the four ribonucleoside triphosphates as substrates. The polypeptide is DNA-directed RNA polymerase subunit alpha (Methylobacterium radiotolerans (strain ATCC 27329 / DSM 1819 / JCM 2831 / NBRC 15690 / NCIMB 10815 / 0-1)).